The sequence spans 100 residues: NADH-quinone oxidoreductase subunit K 2 (100 aa).

3 helical membrane-spanning segments follow: residues 4–24, 29–49, and 60–80; these read LNNYLILSAILFSIGTIGVLV, IVIFMCVEMMLNAVNLTFIAF, and IFVFFVMTVAAAEAAVGLALM.

It belongs to the complex I subunit 4L family. In terms of assembly, NDH-1 is composed of 14 different subunits. Subunits NuoA, H, J, K, L, M, N constitute the membrane sector of the complex.

It is found in the cell inner membrane. It catalyses the reaction a quinone + NADH + 5 H(+)(in) = a quinol + NAD(+) + 4 H(+)(out). NDH-1 shuttles electrons from NADH, via FMN and iron-sulfur (Fe-S) centers, to quinones in the respiratory chain. The immediate electron acceptor for the enzyme in this species is believed to be ubiquinone. Couples the redox reaction to proton translocation (for every two electrons transferred, four hydrogen ions are translocated across the cytoplasmic membrane), and thus conserves the redox energy in a proton gradient. This is NADH-quinone oxidoreductase subunit K 2 from Geotalea uraniireducens (strain Rf4) (Geobacter uraniireducens).